A 376-amino-acid polypeptide reads, in one-letter code: MDIYKFAVRPLLFDLVKADPEWLHQQTMRSLSWLSHTSDRTSTKWVQNILQKSLCLEDSRLEQNLFGLRFPNPVGLAAGFDKDGVAARIWSSLGFGFAELGTVTFVGQPGNPPPRLFRLPLDQAALNRMGFNNHGAAVMAARLADEKGQFSIPIGINLGKSKVTPLEAAAEDYLNSFRLLKELGDYFVVNVSSPNTPGLRSLQDASMLSSILDVLQKENNSHKPIFVKIAPDLEWEAIADIIGLAKTYQLAGIIATNTTIRRDGLKTQVIEQTGKAPQEEAGGISGAPVRDRSTEIIRFIWQQTQGEIPIIGVGGIFTPEDAWAKITAGASLIQVYTGWIYQGPMMVSQILTGLLSKLEEHELNSISEAIGLEFKS.

Residues 78 to 82 and Thr102 contribute to the FMN site; that span reads AGFDK. A substrate-binding site is contributed by Lys82. 127-131 is a binding site for substrate; it reads NRMGF. FMN contacts are provided by Asn157 and Asn190. Asn190 contacts substrate. Residue Ser193 is the Nucleophile of the active site. Asn195 provides a ligand contact to substrate. Lys228 and Thr256 together coordinate FMN. Position 257-258 (257-258) interacts with substrate; it reads NT. FMN is bound by residues Gly286, Gly315, and 336–337; that span reads YT.

This sequence belongs to the dihydroorotate dehydrogenase family. Type 2 subfamily. Monomer. The cofactor is FMN.

The protein resides in the cell membrane. It carries out the reaction (S)-dihydroorotate + a quinone = orotate + a quinol. It participates in pyrimidine metabolism; UMP biosynthesis via de novo pathway; orotate from (S)-dihydroorotate (quinone route): step 1/1. In terms of biological role, catalyzes the conversion of dihydroorotate to orotate with quinone as electron acceptor. This Nostoc sp. (strain PCC 7120 / SAG 25.82 / UTEX 2576) protein is Dihydroorotate dehydrogenase (quinone).